We begin with the raw amino-acid sequence, 180 residues long: MSDAPRGEDAVLVAVQAALAGRPGVLTGARALSHFGEHSAGWVALAAAGALAQPAKRRSWLAVGAGAFLAHAAAVVIKRVVRRERPSHPDIAVNVGTPSRLSFPSAHATSTTAAAVLLAQTTGVPAPALLVPPMALSRLVLGVHYPTDVVTGVVVGALVGKAVGKAAGRISNSVGAEGDR.

The next 4 helical transmembrane spans lie at 31–51, 61–81, 116–136, and 139–159; these read ALSH…AGAL, LAVG…KRVV, VLLA…PMAL, and LVLG…GALV.

It belongs to the PA-phosphatase related phosphoesterase family.

It localises to the cell membrane. The enzyme catalyses trans,octa-cis-decaprenylphospho-beta-D-ribofuranose 5-phosphate + H2O = trans,octa-cis-decaprenylphospho-beta-D-ribofuranose + phosphate. The protein operates within cell wall biogenesis; cell wall polysaccharide biosynthesis. Phosphatase involved in the biosynthesis of decaprenylphosphoryl arabinose (DPA), which serves as the arabinose donor for the biosynthesis of arabinogalactan, the major mycobacterial cell wall polysaccharide. Catalyzes the dephosphorylation of decaprenylphosphoryl-5-phosphoribose (DPPR) to decaprenyl-phosphoribose (DPR). The sequence is that of Decaprenylphosphoryl-5-phosphoribose phosphatase from Mycolicibacterium smegmatis (strain ATCC 700084 / mc(2)155) (Mycobacterium smegmatis).